The chain runs to 114 residues: Small ribosomal subunit protein bS6 (114 aa).

Belongs to the bacterial ribosomal protein bS6 family.

Binds together with bS18 to 16S ribosomal RNA. This is Small ribosomal subunit protein bS6 from Hydrogenovibrio crunogenus (strain DSM 25203 / XCL-2) (Thiomicrospira crunogena).